The following is a 639-amino-acid chain: MPVSDSGFDNSSKTMKDDTIPTEDYEEITKESEMGDATKITSKIDANVIEKKDTDSENNITIAQDDEKVSWLQRVVEFFEVKNDSTDLADHKPENPIRTFKDLQESLRSTYLYNTDLRPVEAKRRTWTWKQYIFFWISGSFNVNTWQISATGLQLGLNWWQTWICIWVGYTFVAFFLILGSKVGNNYHISFPISSRVSFGIYFSIWIVINRVVMACVWNSTLAYIGSQCVQLMLKAIFGTNLNTRIKDTIKNPNLTNFEFMCFMVFWVACLPFLWFPPDKLRHIFALKSAITPFAAFGFLIWTLCKAKGHLALGSLNDNGGAISKTVLAWSVIRAIMSALDNFSTLILNAPDFTRFGKTYKSSVYSQLIALPVCYAIISLIGILSVSAAYTLYGVNYWSPLDILNRYLDNYTSGNRAGVFLISFIFAFDQLGANLSGNSIPAGTDLTALLPKFINIRRGSYICALISLAICPWDLLSSSSKFTTALAAYAVFLSAIAGVISADYFIVRKGYVNIFHCYTDKPGSYYMYNKYGTNWRAVVAYIFGIAPNFAGFLGSVGVSVPIGAMKVYYLNYFVGYLLAALSYCILVYFYPIKGIPGDAKITDRKWLEEWVEVEEFGTEREAFEEYGGVSTGYEKIRYI.

The tract at residues 1-37 (MPVSDSGFDNSSKTMKDDTIPTEDYEEITKESEMGDA) is disordered. At 1 to 162 (MPVSDSGFDN…LQLGLNWWQT (162 aa)) the chain is on the cytoplasmic side. At threonine 54 the chain carries Phosphothreonine. Position 56 is a phosphoserine (serine 56). A helical transmembrane segment spans residues 163–180 (WICIWVGYTFVAFFLILG). The Extracellular segment spans residues 181 to 200 (SKVGNNYHISFPISSRVSFG). Residues 201–225 (IYFSIWIVINRVVMACVWNSTLAYI) traverse the membrane as a helical segment. Residues 226-259 (GSQCVQLMLKAIFGTNLNTRIKDTIKNPNLTNFE) lie on the Cytoplasmic side of the membrane. Residues 260-276 (FMCFMVFWVACLPFLWF) traverse the membrane as a helical segment. The Extracellular segment spans residues 277–283 (PPDKLRH). The chain crosses the membrane as a helical span at residues 284 to 305 (IFALKSAITPFAAFGFLIWTLC). Residues 306-367 (KAKGHLALGS…KTYKSSVYSQ (62 aa)) are Cytoplasmic-facing. Residues 368–392 (LIALPVCYAIISLIGILSVSAAYTL) traverse the membrane as a helical segment. Residues 393 to 416 (YGVNYWSPLDILNRYLDNYTSGNR) lie on the Extracellular side of the membrane. Residues 417 to 435 (AGVFLISFIFAFDQLGANL) form a helical membrane-spanning segment. Residues 436-460 (SGNSIPAGTDLTALLPKFINIRRGS) lie on the Cytoplasmic side of the membrane. A helical transmembrane segment spans residues 461 to 477 (YICALISLAICPWDLLS). Topologically, residues 478–483 (SSSKFT) are extracellular. Residues 484–507 (TALAAYAVFLSAIAGVISADYFIV) traverse the membrane as a helical segment. At 508-537 (RKGYVNIFHCYTDKPGSYYMYNKYGTNWRA) the chain is on the cytoplasmic side. The helical transmembrane segment at 538–562 (VVAYIFGIAPNFAGFLGSVGVSVPI) threads the bilayer. The Extracellular segment spans residues 563 to 572 (GAMKVYYLNY). Residues 573 to 590 (FVGYLLAALSYCILVYFY) traverse the membrane as a helical segment. At 591–639 (PIKGIPGDAKITDRKWLEEWVEVEEFGTEREAFEEYGGVSTGYEKIRYI) the chain is on the cytoplasmic side. A Glycyl lysine isopeptide (Lys-Gly) (interchain with G-Cter in ubiquitin) cross-link involves residue lysine 635.

This sequence belongs to the purine-cytosine permease (2.A.39) family.

The protein resides in the membrane. High-affinity transport of uridine. The sequence is that of Uridine permease (FUI1) from Saccharomyces cerevisiae (strain ATCC 204508 / S288c) (Baker's yeast).